Here is a 346-residue protein sequence, read N- to C-terminus: Arsenite methyltransferase (346 aa).

It belongs to the methyltransferase superfamily. Arsenite methyltransferase family.

The enzyme catalyses arsenic triglutathione + [thioredoxin]-dithiol + S-adenosyl-L-methionine + 2 H2O = methylarsonous acid + [thioredoxin]-disulfide + 3 glutathione + S-adenosyl-L-homocysteine + H(+). It carries out the reaction arsenic triglutathione + 2 [thioredoxin]-dithiol + 2 S-adenosyl-L-methionine + H2O = dimethylarsinous acid + 2 [thioredoxin]-disulfide + 3 glutathione + 2 S-adenosyl-L-homocysteine + 2 H(+). It catalyses the reaction arsenic triglutathione + 3 [thioredoxin]-dithiol + 3 S-adenosyl-L-methionine = trimethylarsine + 3 [thioredoxin]-disulfide + 3 glutathione + 3 S-adenosyl-L-homocysteine + 3 H(+). Its function is as follows. Catalyzes the transfer of a methyl group from AdoMet to arsenite, producing methylated arsenicals. Involved in the conversion of As(III) to dimethylarsenate as the main product in the medium and also produces dimethylarsine and trimethylarsine gases. Reduces the arsenic toxicity in the cell and may contribute to the global arsenic cycling. The sequence is that of Arsenite methyltransferase from Aquipseudomonas alcaligenes (strain ATCC 14909 / DSM 50342 / CCUG 1425 / JCM 20561 / NBRC 14159 / NCIMB 9945 / NCTC 10367 / 1577) (Pseudomonas alcaligenes).